A 148-amino-acid chain; its full sequence is Large ribosomal subunit protein bL9 (148 aa).

The protein belongs to the bacterial ribosomal protein bL9 family.

Binds to the 23S rRNA. The sequence is that of Large ribosomal subunit protein bL9 from Acinetobacter baumannii (strain AB307-0294).